A 74-amino-acid chain; its full sequence is Sec-independent protein translocase protein TatA (74 aa).

A helical transmembrane segment spans residues 1 to 21 (MGSFSIWHWLIVLLIVVLVFG).

This sequence belongs to the TatA/E family. As to quaternary structure, the Tat system comprises two distinct complexes: a TatABC complex, containing multiple copies of TatA, TatB and TatC subunits, and a separate TatA complex, containing only TatA subunits. Substrates initially bind to the TatABC complex, which probably triggers association of the separate TatA complex to form the active translocon.

The protein localises to the cell inner membrane. In terms of biological role, part of the twin-arginine translocation (Tat) system that transports large folded proteins containing a characteristic twin-arginine motif in their signal peptide across membranes. TatA could form the protein-conducting channel of the Tat system. This is Sec-independent protein translocase protein TatA from Nitrosospira multiformis (strain ATCC 25196 / NCIMB 11849 / C 71).